Reading from the N-terminus, the 189-residue chain is dCTP deaminase (189 aa).

Residues 112-117 (KSTYAR), 136-138 (TLE), Q157, Y171, and Q181 each bind dCTP. E138 serves as the catalytic Proton donor/acceptor.

This sequence belongs to the dCTP deaminase family. In terms of assembly, homotrimer.

The enzyme catalyses dCTP + H2O + H(+) = dUTP + NH4(+). Its pathway is pyrimidine metabolism; dUMP biosynthesis; dUMP from dCTP (dUTP route): step 1/2. Functionally, catalyzes the deamination of dCTP to dUTP. This chain is dCTP deaminase, found in Halorhodospira halophila (strain DSM 244 / SL1) (Ectothiorhodospira halophila (strain DSM 244 / SL1)).